Reading from the N-terminus, the 123-residue chain is Small ribosomal subunit protein uS13 (123 aa).

The span at 99–113 (RGQRTHTNARTRKGG) shows a compositional bias: basic residues. The tract at residues 99–123 (RGQRTHTNARTRKGGSRLAVAAKKK) is disordered.

The protein belongs to the universal ribosomal protein uS13 family. As to quaternary structure, part of the 30S ribosomal subunit. Forms a loose heterodimer with protein S19. Forms two bridges to the 50S subunit in the 70S ribosome.

In terms of biological role, located at the top of the head of the 30S subunit, it contacts several helices of the 16S rRNA. In the 70S ribosome it contacts the 23S rRNA (bridge B1a) and protein L5 of the 50S subunit (bridge B1b), connecting the 2 subunits; these bridges are implicated in subunit movement. Contacts the tRNAs in the A and P-sites. This Anaplasma phagocytophilum (strain HZ) protein is Small ribosomal subunit protein uS13.